The chain runs to 304 residues: Neurexophilin-4 (304 aa).

A signal peptide spans 1–23 (MRLLPEWLLLLFGPWLLRKVISG). An II region spans residues 24-84 (QIVESGRPQY…GALARPGAAG (61 aa)). N-linked (GlcNAc...) asparagine glycosylation is found at N72, N133, N143, and N149. The III stretch occupies residues 85-163 (GPPVPRTKRK…IVPPSKRVEF (79 aa)). The IV (linker domain) stretch occupies residues 164–220 (GGVWLPGPAPHPLQSTLALEGVLPGLGPPLGMAGQGLGGNLGGALAGPLGGALGVPG). The v (Cys-rich) stretch occupies residues 221-304 (AKESRAFNCH…NFQSEHPYFG (84 aa)).

The protein belongs to the neurexophilin family. In terms of processing, may be proteolytically processed in neuron-like cells. In terms of tissue distribution, brain and kidney.

The protein resides in the secreted. May be signaling molecules that resemble neuropeptides and that act by binding to alpha-neurexins and possibly other receptors. This Rattus norvegicus (Rat) protein is Neurexophilin-4 (Nxph4).